The following is a 236-amino-acid chain: 2-C-methyl-D-erythritol 4-phosphate cytidylyltransferase (236 aa).

Belongs to the IspD/TarI cytidylyltransferase family. IspD subfamily. In terms of assembly, homodimer.

It catalyses the reaction 2-C-methyl-D-erythritol 4-phosphate + CTP + H(+) = 4-CDP-2-C-methyl-D-erythritol + diphosphate. The protein operates within isoprenoid biosynthesis; isopentenyl diphosphate biosynthesis via DXP pathway; isopentenyl diphosphate from 1-deoxy-D-xylulose 5-phosphate: step 2/6. In terms of biological role, catalyzes the formation of 4-diphosphocytidyl-2-C-methyl-D-erythritol from CTP and 2-C-methyl-D-erythritol 4-phosphate (MEP). The chain is 2-C-methyl-D-erythritol 4-phosphate cytidylyltransferase from Salmonella paratyphi C (strain RKS4594).